The following is a 227-amino-acid chain: Homeobox-leucine zipper protein ATHB-54 (227 aa).

The homeobox DNA-binding region spans 65–124; the sequence is EITKKRKLTPIQLRLLEESFEEEKRLEPDRKLWLAEKLGLQPSQVAVWFQNRRARYKTKQ. Positions 125 to 153 are leucine-zipper; that stretch reads LEHDCDSLKASYAKLKTDWDILFVQNQTL. The tract at residues 175 to 198 is disordered; the sequence is IERKRLGEEGSSVKSDNTQYSEEE.

It belongs to the HD-ZIP homeobox family. Class I subfamily. As to expression, predominantly expressed in flowers and siliques.

It is found in the nucleus. Probable transcription factor. This Arabidopsis thaliana (Mouse-ear cress) protein is Homeobox-leucine zipper protein ATHB-54 (ATHB-54).